Consider the following 165-residue polypeptide: Cyclic pyranopterin monophosphate synthase (165 aa).

Substrate-binding positions include 75–77 and 115–116; these read MCH and ME. Aspartate 130 is a catalytic residue.

The protein belongs to the MoaC family. Homohexamer; trimer of dimers.

The enzyme catalyses (8S)-3',8-cyclo-7,8-dihydroguanosine 5'-triphosphate = cyclic pyranopterin phosphate + diphosphate. Its pathway is cofactor biosynthesis; molybdopterin biosynthesis. Its function is as follows. Catalyzes the conversion of (8S)-3',8-cyclo-7,8-dihydroguanosine 5'-triphosphate to cyclic pyranopterin monophosphate (cPMP). This is Cyclic pyranopterin monophosphate synthase from Halalkalibacterium halodurans (strain ATCC BAA-125 / DSM 18197 / FERM 7344 / JCM 9153 / C-125) (Bacillus halodurans).